Reading from the N-terminus, the 424-residue chain is Homeobox-containing protein 1 (424 aa).

Residues 1–30 form the HNF-p1 domain; sequence MLFTIEQLELIKKLQHTGMSSDQLLKAFGE. The region spanning 103–199 is the POU-specific atypical domain; that stretch reads SQRTPMKEIT…PNKLAAFLAD (97 aa). Residues 215–291 constitute a DNA-binding region (homeobox); the sequence is QRRERYVFRP…NKRKELRRRS (77 aa). The disordered stretch occupies residues 291 to 345; the sequence is SAEASAASTSSASSSASSTANHDSVSVSSMSPRDEETSSRNTTPETAISPSPAVS. Over residues 293 to 310 the composition is skewed to low complexity; that stretch reads EASAASTSSASSSASSTA. Polar residues-rich tracts occupy residues 311–321 and 329–345; these read NHDSVSVSSMS and SRNT…PAVS.

It belongs to the HMBOX1 homeobox family. Expressed in both AWC neurons. Also expressed in the FLP mechanosensory neurons.

Its subcellular location is the nucleus. In terms of biological role, transcriptional repressor which maintains cell fate asymmetry of AWC neurons in adults by repressing the expression of multiple AWC (OFF) genes, including srsx-3 in the AWC (ON) neuron. In Caenorhabditis elegans, this protein is Homeobox-containing protein 1.